The primary structure comprises 94 residues: ESAT-6-like protein EsxI (94 aa).

It belongs to the WXG100 family. ESAT-6 subfamily.

It is found in the secreted. This is ESAT-6-like protein EsxI from Mycobacterium tuberculosis (strain ATCC 25618 / H37Rv).